The sequence spans 337 residues: tRNA N6-adenosine threonylcarbamoyltransferase (337 aa).

The Fe cation site is built by His111 and His115. Substrate contacts are provided by residues 134 to 138 (LVSGG), Asp167, Gly180, and Asn272. Asp300 contacts Fe cation.

It belongs to the KAE1 / TsaD family. Fe(2+) serves as cofactor.

It is found in the cytoplasm. It catalyses the reaction L-threonylcarbamoyladenylate + adenosine(37) in tRNA = N(6)-L-threonylcarbamoyladenosine(37) in tRNA + AMP + H(+). Required for the formation of a threonylcarbamoyl group on adenosine at position 37 (t(6)A37) in tRNAs that read codons beginning with adenine. Is involved in the transfer of the threonylcarbamoyl moiety of threonylcarbamoyl-AMP (TC-AMP) to the N6 group of A37, together with TsaE and TsaB. TsaD likely plays a direct catalytic role in this reaction. The chain is tRNA N6-adenosine threonylcarbamoyltransferase from Escherichia coli O157:H7.